Reading from the N-terminus, the 239-residue chain is 1-(5-phosphoribosyl)-5-[(5-phosphoribosylamino)methylideneamino] imidazole-4-carboxamide isomerase (239 aa).

The Proton acceptor role is filled by aspartate 8. Aspartate 129 (proton donor) is an active-site residue.

The protein belongs to the HisA/HisF family.

Its subcellular location is the cytoplasm. The catalysed reaction is 1-(5-phospho-beta-D-ribosyl)-5-[(5-phospho-beta-D-ribosylamino)methylideneamino]imidazole-4-carboxamide = 5-[(5-phospho-1-deoxy-D-ribulos-1-ylimino)methylamino]-1-(5-phospho-beta-D-ribosyl)imidazole-4-carboxamide. It functions in the pathway amino-acid biosynthesis; L-histidine biosynthesis; L-histidine from 5-phospho-alpha-D-ribose 1-diphosphate: step 4/9. In Bacillus cereus (strain G9842), this protein is 1-(5-phosphoribosyl)-5-[(5-phosphoribosylamino)methylideneamino] imidazole-4-carboxamide isomerase.